The primary structure comprises 69 residues: Protease inhibitor carrapatin (69 aa).

One can recognise a BPTI/Kunitz inhibitor domain in the interval 8-58 (CVPTADPGPCKGFMPMWWYNIFTSQCEEFIYGGCQGNDNRYRTKEECDKTC). Cystine bridges form between cysteine 8–cysteine 58, cysteine 17–cysteine 41, and cysteine 33–cysteine 54.

It localises to the secreted. In terms of biological role, serine protease inhibitor. The protein is Protease inhibitor carrapatin of Rhipicephalus microplus (Cattle tick).